The following is a 209-amino-acid chain: Peptide methionine sulfoxide reductase MsrA (209 aa).

C14 is an active-site residue. The segment at 183 to 209 is disordered; it reads FSALTTGGNQPGARGGLTNNTCQHPRH. The span at 199–209 shows a compositional bias: polar residues; that stretch reads LTNNTCQHPRH.

Belongs to the MsrA Met sulfoxide reductase family.

It catalyses the reaction L-methionyl-[protein] + [thioredoxin]-disulfide + H2O = L-methionyl-(S)-S-oxide-[protein] + [thioredoxin]-dithiol. It carries out the reaction [thioredoxin]-disulfide + L-methionine + H2O = L-methionine (S)-S-oxide + [thioredoxin]-dithiol. Functionally, has an important function as a repair enzyme for proteins that have been inactivated by oxidation. Catalyzes the reversible oxidation-reduction of methionine sulfoxide in proteins to methionine. This is Peptide methionine sulfoxide reductase MsrA from Pseudomonas fluorescens.